Consider the following 192-residue polypeptide: Probable protein adenylyltransferase y4lH (192 aa).

Positions 52–190 (LDFAHYRALH…LAPLAAEIRR (139 aa)) constitute a Fido domain. ATP is bound by residues 82 to 83 (KG) and 139 to 141 (GNG).

This sequence belongs to the fic family.

The catalysed reaction is L-tyrosyl-[protein] + ATP = O-(5'-adenylyl)-L-tyrosyl-[protein] + diphosphate. It catalyses the reaction L-threonyl-[protein] + ATP = 3-O-(5'-adenylyl)-L-threonyl-[protein] + diphosphate. In terms of biological role, probable adenylyltransferase that mediates the addition of adenosine 5'-monophosphate (AMP) to specific residues of target proteins. This chain is Probable protein adenylyltransferase y4lH, found in Sinorhizobium fredii (strain NBRC 101917 / NGR234).